Consider the following 62-residue polypeptide: Photosystem II reaction center protein Z (62 aa).

2 helical membrane-spanning segments follow: residues 8–28 and 41–61; these read AVFA…VVFA and FSGT…NSLI.

It belongs to the PsbZ family. PSII is composed of 1 copy each of membrane proteins PsbA, PsbB, PsbC, PsbD, PsbE, PsbF, PsbH, PsbI, PsbJ, PsbK, PsbL, PsbM, PsbT, PsbY, PsbZ, Psb30/Ycf12, at least 3 peripheral proteins of the oxygen-evolving complex and a large number of cofactors. It forms dimeric complexes.

It localises to the plastid. The protein resides in the chloroplast thylakoid membrane. Functionally, may control the interaction of photosystem II (PSII) cores with the light-harvesting antenna, regulates electron flow through the 2 photosystem reaction centers. PSII is a light-driven water plastoquinone oxidoreductase, using light energy to abstract electrons from H(2)O, generating a proton gradient subsequently used for ATP formation. This Pelargonium hortorum (Common geranium) protein is Photosystem II reaction center protein Z.